A 413-amino-acid polypeptide reads, in one-letter code: Tubby-like F-box protein 6 (413 aa).

Residues 67 to 122 (SIWVDLPPELLLDIIQRIESEQSLWPGRRDVVACASVCKSWREMTKEVVKVPELSG) enclose the F-box domain.

The protein belongs to the TUB family. Ubiquitous, with higher levels in flowers.

The protein is Tubby-like F-box protein 6 of Arabidopsis thaliana (Mouse-ear cress).